Here is a 638-residue protein sequence, read N- to C-terminus: tRNA uridine 5-carboxymethylaminomethyl modification enzyme MnmG (638 aa).

Residues 15–20, Ile-127, and Ser-182 contribute to the FAD site; that span reads GAGHAG. NAD(+) is bound at residue 276-290; sequence GPRYCPSIEDKIVRF. Gln-373 is an FAD binding site.

Belongs to the MnmG family. As to quaternary structure, homodimer. Heterotetramer of two MnmE and two MnmG subunits. FAD serves as cofactor.

Its subcellular location is the cytoplasm. NAD-binding protein involved in the addition of a carboxymethylaminomethyl (cmnm) group at the wobble position (U34) of certain tRNAs, forming tRNA-cmnm(5)s(2)U34. This is tRNA uridine 5-carboxymethylaminomethyl modification enzyme MnmG from Streptococcus suis (strain 98HAH33).